A 362-amino-acid polypeptide reads, in one-letter code: 3-isopropylmalate dehydrogenase (362 aa).

An NAD(+)-binding site is contributed by 78-91 (GPKWEHLAPNDQPE). Substrate-binding residues include Arg-99, Arg-109, Arg-138, and Asp-227. Positions 227, 251, and 255 each coordinate Mg(2+). Position 285 to 297 (285 to 297 (GSAPDIAGKNIAN)) interacts with NAD(+).

The protein belongs to the isocitrate and isopropylmalate dehydrogenases family. LeuB type 1 subfamily. In terms of assembly, homodimer. Mg(2+) serves as cofactor. Requires Mn(2+) as cofactor.

The protein localises to the cytoplasm. It catalyses the reaction (2R,3S)-3-isopropylmalate + NAD(+) = 4-methyl-2-oxopentanoate + CO2 + NADH. The protein operates within amino-acid biosynthesis; L-leucine biosynthesis; L-leucine from 3-methyl-2-oxobutanoate: step 3/4. Its function is as follows. Catalyzes the oxidation of 3-carboxy-2-hydroxy-4-methylpentanoate (3-isopropylmalate) to 3-carboxy-4-methyl-2-oxopentanoate. The product decarboxylates to 4-methyl-2 oxopentanoate. The chain is 3-isopropylmalate dehydrogenase from Photobacterium profundum (strain SS9).